A 959-amino-acid polypeptide reads, in one-letter code: MARLNPLSFTPGPVIFFTCAVYIALFAALLTVHLRVPDYPSKTPDGVNLTQAWSDLEKITRRFHPYNSHANDDVRDYLLTRVKSIIASKKLGGDQVELIDDNESNATFSSGSTTVYFEGTNIIVAIRGSEDDEPYHSPQSSPPGERRLDNGGVLVNAHYDSVSSGYGATDDGVGVVTVLQLLSYFTESKNWPKRTVILLLNNGEEDFLNGAKAFMRHPISQIAHTFVNLEGAGAGGRATMFRSTDTEVTRYYKASSHPFASVVSGDGFKKRLIRSETDYKVFYEELGLRGLDIAFMEPRARYHTVEDSTRETSLNSVWHMLSAAIATTSGLASDTSEQFSGSEDEHEPYTGKVKTGHGTDAVWFDLFGKVFVVFQLHTMFALCVTLLVVAPLFLIGLTFGLSKADKNYLFARKAYMYSSDDDHPVHLYGWRGFFRFPIVFSIATAVVVGLAYLMVRLNPLILYSSPYAVWSMMLSAWFSVAWFFSRGASAMRPSALQRMYALIWLFAGSFALLAFVTVLSNNYQVAGGYFALFYFAGIFLALVLSYLELFFAPTKTAFARYSAQGDEPVSRPLTGTTTAARSEEPPIADDDATETTSLLRGDRRSFARHSGRRDSIDDENGNRDEEPVQLDLKQPYPGEQDWSGKLPGWLWLLQLLLVAPIVVILVGQIALLLTSALHQTPADGNSSLFVYLAFALLTTLLLAPIGPFIHRFTWHVPTFVFLVCVATVIYNLVAFPFSREHRLKVYFVQQVDLATGNNRVSLTGVDGYVQRIVADLPSAQGEQINCTTPEAANRKELMTCTWPGLPAQVVTRASRFSNKTDTDGWLDFSITTSNKTNEATISVAGQNTRACRIVVDSHHSGVTNVTVAGAVSDPRFKAVGETGSREIRLWHREWSHPWNVSVTWPRENSKPSGRIICLWSDANAGDIPAFDEVQHYLPVWAIPSKISDGLVEGFKYFQV.

Residues 1–13 (MARLNPLSFTPGP) are Cytoplasmic-facing. Residues 14–34 (VIFFTCAVYIALFAALLTVHL) traverse the membrane as a helical segment. The Vacuolar portion of the chain corresponds to 35–378 (RVPDYPSKTP…KVFVVFQLHT (344 aa)). N-linked (GlcNAc...) asparagine glycosylation is found at Asn48, Asn102, and Asn105. A disordered region spans residues 128-149 (GSEDDEPYHSPQSSPPGERRLD). Residues His158 and Asp170 each coordinate Zn(2+). Residue Glu204 is the Proton acceptor of the active site. Zn(2+) contacts are provided by Glu205, Glu230, and His303. The helical transmembrane segment at 379-399 (MFALCVTLLVVAPLFLIGLTF) threads the bilayer. Over 400–432 (GLSKADKNYLFARKAYMYSSDDDHPVHLYGWRG) the chain is Cytoplasmic. The chain crosses the membrane as a helical span at residues 433-453 (FFRFPIVFSIATAVVVGLAYL). Residues 454-463 (MVRLNPLILY) lie on the Vacuolar side of the membrane. Residues 464–484 (SSPYAVWSMMLSAWFSVAWFF) form a helical membrane-spanning segment. Residues 485 to 498 (SRGASAMRPSALQR) lie on the Cytoplasmic side of the membrane. The helical transmembrane segment at 499–519 (MYALIWLFAGSFALLAFVTVL) threads the bilayer. The Vacuolar segment spans residues 520-524 (SNNYQ). A helical membrane pass occupies residues 525–545 (VAGGYFALFYFAGIFLALVLS). Over 546-645 (YLELFFAPTK…YPGEQDWSGK (100 aa)) the chain is Cytoplasmic. Disordered stretches follow at residues 566–594 (DEPVSRPLTGTTTAARSEEPPIADDDATE) and 606–635 (FARHSGRRDSIDDENGNRDEEPVQLDLKQP). Over residues 612-626 (RRDSIDDENGNRDEE) the composition is skewed to basic and acidic residues. A helical membrane pass occupies residues 646–666 (LPGWLWLLQLLLVAPIVVILV). Over 667-688 (GQIALLLTSALHQTPADGNSSL) the chain is Vacuolar. Residue Asn685 is glycosylated (N-linked (GlcNAc...) asparagine). A helical transmembrane segment spans residues 689–709 (FVYLAFALLTTLLLAPIGPFI). Residues 710 to 716 (HRFTWHV) lie on the Cytoplasmic side of the membrane. Residues 717 to 737 (PTFVFLVCVATVIYNLVAFPF) form a helical membrane-spanning segment. The Vacuolar segment spans residues 738-959 (SREHRLKVYF…LVEGFKYFQV (222 aa)). N-linked (GlcNAc...) asparagine glycans are attached at residues Asn785, Asn818, Asn834, Asn864, and Asn899.

The protein belongs to the peptidase M28 family. Zn(2+) is required as a cofactor.

It is found in the vacuole membrane. In terms of biological role, may be involved in vacuolar sorting and osmoregulation. This chain is Vacuolar membrane protease, found in Phaeosphaeria nodorum (strain SN15 / ATCC MYA-4574 / FGSC 10173) (Glume blotch fungus).